The chain runs to 476 residues: Inner membrane transporter YcaM (476 aa).

Residues 1–9 (MAGNVQEKQ) are Cytoplasmic-facing. The helical transmembrane segment at 10-30 (LRWYNIALMSFITVWGFGNVV) threads the bilayer. The Periplasmic segment spans residues 31–38 (NNYANQGL). A helical transmembrane segment spans residues 39 to 59 (VVVFSWVFIFALYFTPYALIV). The Cytoplasmic portion of the chain corresponds to 60-80 (GQLGSTFKDGKGGVSTWIKHT). A helical membrane pass occupies residues 81 to 101 (MGPGLAYLAAWTYWVVHIPYL). Over 102–125 (AQKPQAILIALGWAMKGDGSLIKE) the chain is Periplasmic. A helical membrane pass occupies residues 126 to 146 (YSVVALQGLTLVLFIFFMWVA). Over 147-154 (SRGMKSLK) the chain is Cytoplasmic. The helical transmembrane segment at 155–175 (IVGSVAGIAMFVMSLLYVAMA) threads the bilayer. At 176 to 195 (VTAPAITEVHIATTNITWET) the chain is on the periplasmic side. The chain crosses the membrane as a helical span at residues 196 to 216 (FIPHIDFTYITTISMLVFAVG). At 217–240 (GAEKISPYVNQTRNPGKEFPKGML) the chain is on the cytoplasmic side. Residues 241 to 261 (CLAVMVAVCAILGSLAMGMMF) form a helical membrane-spanning segment. The Periplasmic portion of the chain corresponds to 262–291 (DSRNIPDDLMTNGQYYAFQKLGEYYNMGNT). The chain crosses the membrane as a helical span at residues 292 to 312 (LMVIYAIANTLGQVAALVFSI). At 313–343 (DAPLKVLLGDADSKYIPASLCRTNASGTPVN) the chain is on the cytoplasmic side. A helical membrane pass occupies residues 344–364 (GYFLTLVLVAILIMLPTLGIG). The Periplasmic portion of the chain corresponds to 365–375 (DMNNLYKWLLN). A helical membrane pass occupies residues 376-396 (LNSVVMPLRYLWVFVAFIAVV). At 397-414 (RLAQKYKPEYVFIRNKPL) the chain is on the cytoplasmic side. The helical transmembrane segment at 415–435 (AMTVGIWCFAFTAFACLTGIF) threads the bilayer. Residues 436–448 (PKMEAFTAEWTFQ) lie on the Periplasmic side of the membrane. Residues 449–469 (LALNVATPFVLVGLGLIFPLL) traverse the membrane as a helical segment. Over 470–476 (ARKANSK) the chain is Cytoplasmic.

It belongs to the amino acid-polyamine-organocation (APC) superfamily.

It is found in the cell inner membrane. The polypeptide is Inner membrane transporter YcaM (ycaM) (Escherichia coli (strain K12)).